Reading from the N-terminus, the 469-residue chain is MAMKAPDPGGSGEILPSTPSLSETTSGGAAAASKSAQLPSSSSDIDNIHVPSYSSWFSWTDINDCEVRSLPEFFDSRSSSKNPKFYLYLRNSIIKQYRDDHPRKISFTDVRRTLVSDVVSIRRVFDFLDSWGLINYNSSASAKPLKWEEKEAGKSAGDAASEPATTVKETAKRNCNGCKAICSIACFACDKYDLTLCARCYVRSNYRVGINSSEFKRVEISEESKPEWSDKEILLLLEAVMHYGDDWKKVASHVIGRTEKDCVSQFVKLPFGEQFVKESDSEDGLEMFDQIKDSDIPESEGIDKDGSSPNKRIKLTPLADASNPIMAQAAFLSALAGTNVAEAAARAAVRALSDVDYEADKNASRDPNRQDANAASSGETTRNESERAWADAKSLIEKEEHEVEGAIKETVEVEMKKIRDRIVHFEKLDLEMERSRKQLEEVRNLLFVDQLNIFFHTRKARKTEDRIEC.

The segment at 1 to 42 is disordered; that stretch reads MAMKAPDPGGSGEILPSTPSLSETTSGGAAAASKSAQLPSSS. Residues 15-42 show a composition bias toward low complexity; sequence LPSTPSLSETTSGGAAAASKSAQLPSSS. In terms of domain architecture, SWIRM spans 48–145; the sequence is IHVPSYSSWF…YNSSASAKPL (98 aa). The region spanning 223–274 is the SANT domain; that stretch reads ESKPEWSDKEILLLLEAVMHYGDDWKKVASHVIGRTEKDCVSQFVKLPFGEQ. 2 stretches are compositionally biased toward basic and acidic residues: residues 293 to 306 and 360 to 369; these read DSDIPESEGIDKDG and DKNASRDPNR. Disordered regions lie at residues 293–314 and 360–387; these read DSDIPESEGIDKDGSSPNKRIK and DKNASRDPNRQDANAASSGETTRNESER. Over residues 370-380 the composition is skewed to polar residues; it reads QDANAASSGET. Residues 423–447 adopt a coiled-coil conformation; the sequence is VHFEKLDLEMERSRKQLEEVRNLLF.

In terms of assembly, homodimers and heterodimers. Interacts with SWI3A, SWI3C, SWI3D, BSH, BRM and FCA (via C-terminus), and (via N-terminus) with HAB1. Interacts with MORC6 and SUVH9. Expressed in roots, stems, leaves, flowers and siliques.

Its subcellular location is the nucleus. Component of a multiprotein complex equivalent of the SWI/SNF complex, an ATP-dependent chromatin-remodeling complex, which is required for the positive and negative regulation of gene expression of a large number of genes. It changes chromatin structure by altering DNA-histone contacts within a nucleosome, leading eventually to a change in nucleosome position, thus facilitating or repressing binding of gene-specific transcription factors. May play an essential role in the transition from the vegetative to the reproductive phase of development. May be a positive regulator of ABA signaling. The protein is SWI/SNF complex subunit SWI3B (SWI3B) of Arabidopsis thaliana (Mouse-ear cress).